A 526-amino-acid polypeptide reads, in one-letter code: Probable inorganic phosphate transporter 1-3 (526 aa).

The Cytoplasmic segment spans residues 1 to 21; it reads MADGQLKVLTTLDHARTQWYH. Residues 22 to 42 form a helical membrane-spanning segment; that stretch reads FMAIVIAGMGFFTDAYDLFCI. Residues 43-70 are Extracellular-facing; it reads SLVSKLLGRIYYTDLAGDNPGSLPPNVS. A helical membrane pass occupies residues 71-91; sequence AAVNGVALCGTLAGQLFFGWL. Topologically, residues 92-99 are cytoplasmic; the sequence is GDKLGRKS. A helical transmembrane segment spans residues 100–120; sequence VYGFTLVLMVVCSVASGLSFG. Topologically, residues 121–124 are extracellular; sequence RTAK. The helical transmembrane segment at 125–145 threads the bilayer; the sequence is GVVATLCFFRFWLGFGIGGDY. At 146–163 the chain is on the cytoplasmic side; the sequence is PLSATIMSEYANKRTRGA. Residues 164-184 traverse the membrane as a helical segment; it reads FIAAVFAMQGFGILFGAIVAL. Residues 185-211 lie on the Extracellular side of the membrane; sequence VVSAGFRNAYPAPSYADGRAASLVPEA. Residues 212 to 232 traverse the membrane as a helical segment; sequence DYVWRIILMFGTVPAALTYYW. Over 233–294 the chain is Cytoplasmic; it reads RMKMPETARY…GLFSRQFVRR (62 aa). A helical transmembrane segment spans residues 295 to 315; sequence HGVHLVATTSTWFLLDIAFYS. Residues 316–349 lie on the Extracellular side of the membrane; it reads QNLFQKDIFSKVGWIPPARTMNAVEEVFRIARAQ. The helical transmembrane segment at 350–370 threads the bilayer; that stretch reads ALIALCGTIPGYWFTVAFIDV. At 371–373 the chain is on the cytoplasmic side; sequence AGR. Residues 374 to 394 form a helical membrane-spanning segment; it reads FAIQLMGFAMMTVFMLGLAAP. Residues 395–407 are Extracellular-facing; that stretch reads YHHWTTPGNHTGF. The helical transmembrane segment at 408 to 428 threads the bilayer; that stretch reads VVMYGFTFFFANFGPNATTFI. At 429–444 the chain is on the cytoplasmic side; it reads VPAEIYPARLRSTCHG. A helical transmembrane segment spans residues 445–465; that stretch reads ISAAAGKAGAIVGAFGFLYAA. At 466-483 the chain is on the extracellular side; that stretch reads QDPHKPEAGYKPGIGIRN. A helical transmembrane segment spans residues 484–504; that stretch reads ALFVLAGTNFLGMLMTLLVPE. Residues 505-526 lie on the Cytoplasmic side of the membrane; sequence SKGMSLEEVSKENVADDEEATA.

It belongs to the major facilitator superfamily. Phosphate:H(+) symporter (TC 2.A.1.9) family. In terms of tissue distribution, expressed at low levels in roots.

It localises to the membrane. High-affinity transporter for external inorganic phosphate. In Oryza sativa subsp. japonica (Rice), this protein is Probable inorganic phosphate transporter 1-3 (PHT1-3).